The sequence spans 247 residues: LHFPL tetraspan subfamily member 4 protein (247 aa).

The next 4 membrane-spanning stretches (helical) occupy residues 22–42 (IGVL…VVFI), 97–117 (FFVL…ALFF), 127–147 (ICAW…MIFP), and 178–198 (ILAI…FVLG).

It belongs to the LHFP family. In terms of assembly, interacts with GABA(A) receptor subunits. Interacts with GABRB3. Interacts with GABRA2. Interacts with GABRG2. Identified in a complex of 720 kDa composed of LHFPL4, NLGN2, GABRA1, GABRB2, GABRG2 and GABRB3. Interacts with GABRA1. Interacts with NLGN2; leading to mutual regulation of protein level and synaptic clustering.

The protein localises to the cell projection. It localises to the dendrite. The protein resides in the postsynaptic cell membrane. Plays a role in the regulation of inhibitory synapse formation and function by being involved in maintening gamma-aminobutyric acid receptors (GABAARs) clustering and their associated scaffold proteins at inhibitory synaptic sites. Acts in concert with NLGN2 to recruit or stabilize GABAARs. This is LHFPL tetraspan subfamily member 4 protein from Bos taurus (Bovine).